Here is a 387-residue protein sequence, read N- to C-terminus: Chromatin modification-related protein EAF3 (387 aa).

The segment at 52-96 is disordered; that stretch reads NTHKRKRGPRASLPAAGATPDGDDSNDKNRHFSPKEGKPDVPADL. A compositionally biased stretch (basic and acidic residues) spans 76 to 92; the sequence is SNDKNRHFSPKEGKPDV. The Tudor-knot domain occupies 100–126; it reads NEDKICYYVHYKGWKNTWDEWVGEERV. The tract at residues 159–197 is disordered; sequence PPEALSETASPAPTTKRKSMASKDSPAEGPRPVKRRGGL. The MRG domain occupies 211–385; the sequence is KRKEIALVVP…ASPAYEALSK (175 aa).

This sequence belongs to the MRG family. In terms of assembly, component of the NuA4 histone acetyltransferase complex.

It is found in the nucleus. Functionally, involved in deacetylation of histones, chromatin assembly and chromosome segregation. May act as a transcriptional oscillator, directing histone deacetylases to specific chromosomal domains. Component of the NuA4 histone acetyltransferase complex which is involved in transcriptional activation of selected genes principally by acetylation of nucleosomal histone H4 and H2A. The NuA4 complex is also involved in DNA repair. The chain is Chromatin modification-related protein EAF3 (EAF3) from Yarrowia lipolytica (strain CLIB 122 / E 150) (Yeast).